The primary structure comprises 223 residues: 2-C-methyl-D-erythritol 4-phosphate cytidylyltransferase (223 aa).

This sequence belongs to the IspD/TarI cytidylyltransferase family. IspD subfamily.

It carries out the reaction 2-C-methyl-D-erythritol 4-phosphate + CTP + H(+) = 4-CDP-2-C-methyl-D-erythritol + diphosphate. It functions in the pathway isoprenoid biosynthesis; isopentenyl diphosphate biosynthesis via DXP pathway; isopentenyl diphosphate from 1-deoxy-D-xylulose 5-phosphate: step 2/6. In terms of biological role, catalyzes the formation of 4-diphosphocytidyl-2-C-methyl-D-erythritol from CTP and 2-C-methyl-D-erythritol 4-phosphate (MEP). In Prochlorococcus marinus (strain MIT 9301), this protein is 2-C-methyl-D-erythritol 4-phosphate cytidylyltransferase.